We begin with the raw amino-acid sequence, 411 residues long: LL-diaminopimelate aminotransferase (411 aa).

Positions 16 and 43 each coordinate substrate. Residues Tyr-73, 109 to 110 (AK), Tyr-133, Asn-188, Tyr-219, and 247 to 249 (SFS) contribute to the pyridoxal 5'-phosphate site. 3 residues coordinate substrate: Lys-110, Tyr-133, and Asn-188. Residue Lys-250 is modified to N6-(pyridoxal phosphate)lysine. Pyridoxal 5'-phosphate-binding residues include Arg-258 and Asn-293. Residues Asn-293 and Arg-389 each coordinate substrate.

Belongs to the class-I pyridoxal-phosphate-dependent aminotransferase family. LL-diaminopimelate aminotransferase subfamily. As to quaternary structure, homodimer. It depends on pyridoxal 5'-phosphate as a cofactor.

The catalysed reaction is (2S,6S)-2,6-diaminopimelate + 2-oxoglutarate = (S)-2,3,4,5-tetrahydrodipicolinate + L-glutamate + H2O + H(+). Its pathway is amino-acid biosynthesis; L-lysine biosynthesis via DAP pathway; LL-2,6-diaminopimelate from (S)-tetrahydrodipicolinate (aminotransferase route): step 1/1. In terms of biological role, involved in the synthesis of meso-diaminopimelate (m-DAP or DL-DAP), required for both lysine and peptidoglycan biosynthesis. Catalyzes the direct conversion of tetrahydrodipicolinate to LL-diaminopimelate. The chain is LL-diaminopimelate aminotransferase from Methanobrevibacter smithii (strain ATCC 35061 / DSM 861 / OCM 144 / PS).